Reading from the N-terminus, the 244-residue chain is Putative ABC transporter ATP-binding protein gll0289 (244 aa).

Residues 5-237 enclose the ABC transporter domain; it reads LVVEELHYSY…RVLLETHGLE (233 aa). 38–45 contacts ATP; the sequence is GPNGSGKS.

The protein belongs to the ABC transporter superfamily.

The protein resides in the cell inner membrane. Probably part of an ABC transporter complex. Responsible for energy coupling to the transport system. This chain is Putative ABC transporter ATP-binding protein gll0289, found in Gloeobacter violaceus (strain ATCC 29082 / PCC 7421).